Here is a 366-residue protein sequence, read N- to C-terminus: Dual-specificity RNA methyltransferase RlmN (366 aa).

The Proton acceptor role is filled by E91. One can recognise a Radical SAM core domain in the interval 97 to 333 (EDDRGTLCVS…TTVRKTRGED (237 aa)). C104 and C338 form a disulfide bridge. The [4Fe-4S] cluster site is built by C111, C115, and C118. Residues 164 to 165 (GE), S196, 218 to 220 (SLH), and N295 each bind S-adenosyl-L-methionine. Residue C338 is the S-methylcysteine intermediate of the active site.

Belongs to the radical SAM superfamily. RlmN family. Requires [4Fe-4S] cluster as cofactor.

The protein localises to the cytoplasm. It catalyses the reaction adenosine(2503) in 23S rRNA + 2 reduced [2Fe-2S]-[ferredoxin] + 2 S-adenosyl-L-methionine = 2-methyladenosine(2503) in 23S rRNA + 5'-deoxyadenosine + L-methionine + 2 oxidized [2Fe-2S]-[ferredoxin] + S-adenosyl-L-homocysteine. The catalysed reaction is adenosine(37) in tRNA + 2 reduced [2Fe-2S]-[ferredoxin] + 2 S-adenosyl-L-methionine = 2-methyladenosine(37) in tRNA + 5'-deoxyadenosine + L-methionine + 2 oxidized [2Fe-2S]-[ferredoxin] + S-adenosyl-L-homocysteine. Functionally, specifically methylates position 2 of adenine 2503 in 23S rRNA and position 2 of adenine 37 in tRNAs. m2A2503 modification seems to play a crucial role in the proofreading step occurring at the peptidyl transferase center and thus would serve to optimize ribosomal fidelity. The protein is Dual-specificity RNA methyltransferase RlmN of Laribacter hongkongensis (strain HLHK9).